Consider the following 101-residue polypeptide: NAD(P)H-quinone oxidoreductase subunit 4L, chloroplastic (101 aa).

Transmembrane regions (helical) follow at residues 2 to 22, 30 to 52, and 61 to 81; these read ILEHVLVLSAYLFSIGIYGLI, ALMCLELLLNSVNLNFVTFSDFF, and IFSIFIIAIAAAEATIGLAIV.

It belongs to the complex I subunit 4L family. As to quaternary structure, NDH is composed of at least 16 different subunits, 5 of which are encoded in the nucleus.

The protein localises to the plastid. The protein resides in the chloroplast thylakoid membrane. The enzyme catalyses a plastoquinone + NADH + (n+1) H(+)(in) = a plastoquinol + NAD(+) + n H(+)(out). It catalyses the reaction a plastoquinone + NADPH + (n+1) H(+)(in) = a plastoquinol + NADP(+) + n H(+)(out). In terms of biological role, NDH shuttles electrons from NAD(P)H:plastoquinone, via FMN and iron-sulfur (Fe-S) centers, to quinones in the photosynthetic chain and possibly in a chloroplast respiratory chain. The immediate electron acceptor for the enzyme in this species is believed to be plastoquinone. Couples the redox reaction to proton translocation, and thus conserves the redox energy in a proton gradient. The polypeptide is NAD(P)H-quinone oxidoreductase subunit 4L, chloroplastic (Oenothera glazioviana (Large-flowered evening primrose)).